Here is a 271-residue protein sequence, read N- to C-terminus: 5-deoxy-glucuronate isomerase (271 aa).

It belongs to the isomerase IolB family.

The catalysed reaction is 5-deoxy-D-glucuronate = 5-dehydro-2-deoxy-D-gluconate. It participates in polyol metabolism; myo-inositol degradation into acetyl-CoA; acetyl-CoA from myo-inositol: step 4/7. Its function is as follows. Involved in the isomerization of 5-deoxy-glucuronate (5DG) to 5-dehydro-2-deoxy-D-gluconate (DKG or 2-deoxy-5-keto-D-gluconate). In Bacillus licheniformis (strain ATCC 14580 / DSM 13 / JCM 2505 / CCUG 7422 / NBRC 12200 / NCIMB 9375 / NCTC 10341 / NRRL NRS-1264 / Gibson 46), this protein is 5-deoxy-glucuronate isomerase.